The primary structure comprises 245 residues: tRNA1(Val) (adenine(37)-N6)-methyltransferase (245 aa).

Belongs to the methyltransferase superfamily. tRNA (adenine-N(6)-)-methyltransferase family.

It is found in the cytoplasm. The catalysed reaction is adenosine(37) in tRNA1(Val) + S-adenosyl-L-methionine = N(6)-methyladenosine(37) in tRNA1(Val) + S-adenosyl-L-homocysteine + H(+). Specifically methylates the adenine in position 37 of tRNA(1)(Val) (anticodon cmo5UAC). This chain is tRNA1(Val) (adenine(37)-N6)-methyltransferase, found in Escherichia coli O6:K15:H31 (strain 536 / UPEC).